We begin with the raw amino-acid sequence, 106 residues long: Urease subunit beta (106 aa).

Belongs to the urease beta subunit family. As to quaternary structure, heterotrimer of UreA (gamma), UreB (beta) and UreC (alpha) subunits. Three heterotrimers associate to form the active enzyme.

It localises to the cytoplasm. The enzyme catalyses urea + 2 H2O + H(+) = hydrogencarbonate + 2 NH4(+). It functions in the pathway nitrogen metabolism; urea degradation; CO(2) and NH(3) from urea (urease route): step 1/1. The sequence is that of Urease subunit beta from Prochlorococcus marinus (strain AS9601).